A 273-amino-acid chain; its full sequence is Outer surface protein A (273 aa).

The N-terminal stretch at 1–16 (MKKYLLGIGLILALIA) is a signal peptide. Cysteine 17 carries the N-palmitoyl cysteine lipid modification. Cysteine 17 carries the S-diacylglycerol cysteine lipid modification.

It belongs to the OspA lipoprotein family.

It localises to the cell outer membrane. It is found in the cell surface. The polypeptide is Outer surface protein A (Borreliella burgdorferi (strain N40) (Borrelia burgdorferi)).